Reading from the N-terminus, the 560-residue chain is DNA ligase B (560 aa).

The N6-AMP-lysine intermediate role is filled by lysine 124.

The protein belongs to the NAD-dependent DNA ligase family. LigB subfamily.

It catalyses the reaction NAD(+) + (deoxyribonucleotide)n-3'-hydroxyl + 5'-phospho-(deoxyribonucleotide)m = (deoxyribonucleotide)n+m + AMP + beta-nicotinamide D-nucleotide.. Its function is as follows. Catalyzes the formation of phosphodiester linkages between 5'-phosphoryl and 3'-hydroxyl groups in double-stranded DNA using NAD as a coenzyme and as the energy source for the reaction. This is DNA ligase B from Escherichia coli O139:H28 (strain E24377A / ETEC).